The sequence spans 85 residues: Antitoxin VapB4 (85 aa).

It belongs to the phD/YefM antitoxin family. In terms of assembly, interacts with cognate toxin VapC4.

Antitoxin component of a type II toxin-antitoxin (TA) system. Antitoxin that counteracts the effect of the VapC4 toxin. In Mycobacterium tuberculosis (strain CDC 1551 / Oshkosh), this protein is Antitoxin VapB4 (vapB4).